The sequence spans 559 residues: Berberine bridge enzyme-like A (559 aa).

Positions 1-21 are cleaved as a signal peptide; sequence MFPLIILISFSLASLSETATG. Asparagine 25 and asparagine 37 each carry an N-linked (GlcNAc...) asparagine glycan. Cysteines 29 and 86 form a disulfide. Residues 64–240 enclose the FAD-binding PCMH-type domain; sequence FMPKPTFIIL…YAWKIRLLKV (177 aa). Histidine 101 bears the Pros-8alpha-FAD histidine mark. N-linked (GlcNAc...) asparagine glycosylation is found at asparagine 321, asparagine 355, and asparagine 494.

This sequence belongs to the oxygen-dependent FAD-linked oxidoreductase family. FAD serves as cofactor. In terms of tissue distribution, mostly expressed in roots.

The protein localises to the vacuole. The protein operates within alkaloid biosynthesis; nicotine biosynthesis. Its function is as follows. Involved in the biosynthesis of pyridine alkaloid natural products, leading mainly to the production of anabasine, anatabine, nicotine and nornicotine, effective deterrents against herbivores with antiparasitic and pesticide properties (neurotoxins); nornicotine serves as the precursor in the synthesis of the carcinogen compound N'-nitrosonornicotine (NNN). Catalyzes a late oxidation step subsequent to the pyridine ring condensation reaction in the biosynthesis of alkaloids. This is Berberine bridge enzyme-like A from Nicotiana tabacum (Common tobacco).